A 143-amino-acid chain; its full sequence is Sporulation-specific cell division protein SsgB (143 aa).

This sequence belongs to the SsgA family. Interacts with SsgA. Interacts with FtsZ (via N-terminus).

Its subcellular location is the cell septum. In terms of biological role, involved in sporulation-specific cell division. Required for early stages of sporulation. Important in the process of growth cessation prior to sporulation-specific cell division. Recruits cell division protein FtsZ to the future septum sites and tethers the contractile ring structure (Z ring) to the cytoplasmic membrane during sporulation. Stimulates polymerization and filament length of FtsZ in vitro. In Frankia casuarinae (strain DSM 45818 / CECT 9043 / HFP020203 / CcI3), this protein is Sporulation-specific cell division protein SsgB.